The following is a 225-amino-acid chain: Uracil-DNA glycosylase (225 aa).

Aspartate 65 (proton acceptor) is an active-site residue.

It belongs to the uracil-DNA glycosylase (UDG) superfamily. UNG family.

Its subcellular location is the cytoplasm. The enzyme catalyses Hydrolyzes single-stranded DNA or mismatched double-stranded DNA and polynucleotides, releasing free uracil.. Its function is as follows. Excises uracil residues from the DNA which can arise as a result of misincorporation of dUMP residues by DNA polymerase or due to deamination of cytosine. This chain is Uracil-DNA glycosylase, found in Bacillus licheniformis (strain ATCC 14580 / DSM 13 / JCM 2505 / CCUG 7422 / NBRC 12200 / NCIMB 9375 / NCTC 10341 / NRRL NRS-1264 / Gibson 46).